The chain runs to 308 residues: Protoheme IX farnesyltransferase (308 aa).

9 helical membrane-spanning segments follow: residues 31–51, 60–80, 110–130, 131–151, 157–177, 185–205, 232–252, 253–273, and 285–305; these read VGIV…AFYF, LDIV…SCVI, ALWF…MTNL, TAAG…TMWS, VNTI…WTAV, AWVL…ALAI, IIIW…LGLP, IVIL…VGYR, and FVYS…FTLF.

Belongs to the UbiA prenyltransferase family. Protoheme IX farnesyltransferase subfamily. Interacts with CtaA.

The protein resides in the cell membrane. It catalyses the reaction heme b + (2E,6E)-farnesyl diphosphate + H2O = Fe(II)-heme o + diphosphate. Its pathway is porphyrin-containing compound metabolism; heme O biosynthesis; heme O from protoheme: step 1/1. Its function is as follows. Converts heme B (protoheme IX) to heme O by substitution of the vinyl group on carbon 2 of heme B porphyrin ring with a hydroxyethyl farnesyl side group. The sequence is that of Protoheme IX farnesyltransferase from Bacillus licheniformis (strain ATCC 14580 / DSM 13 / JCM 2505 / CCUG 7422 / NBRC 12200 / NCIMB 9375 / NCTC 10341 / NRRL NRS-1264 / Gibson 46).